The following is a 265-amino-acid chain: Ni-sirohydrochlorin a,c-diamide reductive cyclase complex, component CfbC (265 aa).

The protein belongs to the NifH/BchL/ChlL family. As to quaternary structure, homodimer. The Ni-sirohydrochlorin a,c-diamide reductive cyclase complex is composed of a NifH homolog component CfbC and a NifD homolog component CfbD. [4Fe-4S] cluster serves as cofactor.

The enzyme catalyses Ni-sirohydrochlorin a,c-diamide + 3 AH2 + ATP + H2O = 15,17(3)-seco-F430-17(3)-acid + 3 A + ADP + phosphate. Involved in the biosynthesis of the unique nickel-containing tetrapyrrole coenzyme F430, the prosthetic group of methyl-coenzyme M reductase (MCR), which plays a key role in methanogenesis and anaerobic methane oxidation. Catalyzes both the six-electron reduction of the tetrahydroporphyrin ring system and the gamma-lactamization of the c-acetamide side chain of Ni-sirohydrochlorin a,c-diamide to yield 15,17(3)-seco-F430-17(3)-acid (seco-F430), the last intermediate in the biosynthesis of the coenzyme F430. The chain is Ni-sirohydrochlorin a,c-diamide reductive cyclase complex, component CfbC from Methanosarcina barkeri (strain Fusaro / DSM 804).